Consider the following 158-residue polypeptide: Urease accessory protein UreE (158 aa).

This sequence belongs to the UreE family.

It localises to the cytoplasm. Its function is as follows. Involved in urease metallocenter assembly. Binds nickel. Probably functions as a nickel donor during metallocenter assembly. This chain is Urease accessory protein UreE, found in Corynebacterium urealyticum (strain ATCC 43042 / DSM 7109).